Reading from the N-terminus, the 603-residue chain is NADPH-dependent diflavin oxidoreductase 1 (603 aa).

One can recognise a Flavodoxin-like domain in the interval 10–155 (VTILYGSETG…YYSEWETNLL (146 aa)). Residues 16–21 (SETGNA), 64–67 (STTG), 102–111 (IGDSSYPKFN), and Glu-137 each bind FMN. Positions 209–451 (TNLLLGSVKA…HKSNLKFELP (243 aa)) constitute an FAD-binding FR-type domain. FAD contacts are provided by residues Arg-359, 390-393 (RLFS), and 422-425 (GLCT). Residues Thr-465 and 521–522 (SR) each bind NADP(+). Trp-603 contributes to the FAD binding site.

The protein belongs to the NADPH-dependent diflavin oxidoreductase NDOR1 family. In the N-terminal section; belongs to the flavodoxin family. This sequence in the C-terminal section; belongs to the flavoprotein pyridine nucleotide cytochrome reductase family. As to quaternary structure, interacts with DRE2; as part of the cytosolic iron-sulfur (Fe-S) protein assembly (CIA) machinery. It depends on FAD as a cofactor. FMN is required as a cofactor.

The protein resides in the cytoplasm. It localises to the mitochondrion. It catalyses the reaction 2 oxidized [2Fe-2S]-[protein] + NADPH = 2 reduced [2Fe-2S]-[protein] + NADP(+) + H(+). Functionally, NADPH-dependent reductase which is a central component of the cytosolic iron-sulfur (Fe-S) protein assembly (CIA) machinery. Transfers electrons from NADPH via its FAD and FMN prosthetic groups to the [2Fe-2S] cluster of DRE2, another key component of the CIA machinery. In turn, this reduced cluster provides electrons for assembly of cytosolic iron-sulfur cluster proteins. Positively controls H(2)O(2)-induced cell death. The sequence is that of NADPH-dependent diflavin oxidoreductase 1 from Debaryomyces hansenii (strain ATCC 36239 / CBS 767 / BCRC 21394 / JCM 1990 / NBRC 0083 / IGC 2968) (Yeast).